The sequence spans 914 residues: Zinc finger protein 717 (914 aa).

In terms of domain architecture, KRAB spans 22 to 93 (VSFEEVAVHF…EETPNLRLSA (72 aa)). The C2H2-type 1; degenerate zinc finger occupies 209–231 (FQCNEQGKTFNTEAMFFIHKRVH). The segment at 266–277 (RKSDFTKHQQTH) adopts a C2H2-type 2; degenerate zinc-finger fold. Residues 283 to 305 (YECVECEKPSISKSDLMLQCKMP) form a C2H2-type 3; degenerate zinc finger. C2H2-type zinc fingers lie at residues 311-333 (YACN…QRIH), 339-361 (YGCN…ERTH), 367-389 (YKCI…HRTH), 395-417 (YQCS…HRTH), 423-445 (YACD…QRTH), 451-473 (YECN…QRTH), 479-501 (YECN…QWTH), 507-529 (YECN…QRTH), 535-557 (YACN…HRTH), 563-585 (YECN…QRTH), 591-613 (YECN…KRTH), and 619-641 (YECN…QGTH). The C2H2-type 16; degenerate zinc finger occupies 649-669 (CNECGKTFHRKSFLTIHQRTH). The segment at 741-752 (QKSVLTVHHRTH) adopts a C2H2-type 17; degenerate zinc-finger fold. C2H2-type zinc fingers lie at residues 758 to 780 (YECN…QGTH), 786 to 808 (YECD…QRTH), 814 to 836 (FECK…HRTH), 842 to 864 (FRCN…QRTH), and 870 to 892 (YECK…QQTH).

It belongs to the krueppel C2H2-type zinc-finger protein family.

It is found in the nucleus. Functionally, may be involved in transcriptional regulation. The sequence is that of Zinc finger protein 717 from Homo sapiens (Human).